A 224-amino-acid polypeptide reads, in one-letter code: uncharacterized protein (224 aa).

Zn(2+) is bound by residues H57, H59, D61, H62, H138, D162, and H203.

It belongs to the metallo-beta-lactamase superfamily. Glyoxalase II family. Zn(2+) serves as cofactor.

This is an uncharacterized protein from Mycobacterium tuberculosis (strain CDC 1551 / Oshkosh).